A 221-amino-acid polypeptide reads, in one-letter code: Thymine/uracil-DNA glycosylase (221 aa).

One can recognise a HhH domain in the interval 105–133; sequence DYGGRVPRNRKAILDLPGVGKYTCAAVMC. Positions 197, 204, 207, and 213 each coordinate [4Fe-4S] cluster.

Belongs to the Nth/MutY family. [4Fe-4S] cluster serves as cofactor.

It carries out the reaction Hydrolyzes mismatched double-stranded DNA and polynucleotides, releasing free thymine.. DNA glycosylase that excises thymine from T/G mismatches and uracil from U/G mismatches. Acts as a repair enzyme able to counteract the mutagenic effect of spontaneous hydrolytic deamination of DNA 5-methylcytosine (5-meC) residues that leads to the formation of T/G mismatches. May also repair U/G mismatches arising from hydrolytic deamination of DNA cytosine residues. G/G, A/G, T/C and U/C are minor substrates. The chain is Thymine/uracil-DNA glycosylase from Methanothermobacter thermautotrophicus (Methanobacterium thermoformicicum).